The primary structure comprises 616 residues: Chaperone protein HscA (616 aa).

It belongs to the heat shock protein 70 family.

Functionally, chaperone involved in the maturation of iron-sulfur cluster-containing proteins. Has a low intrinsic ATPase activity which is markedly stimulated by HscB. Involved in the maturation of IscU. This chain is Chaperone protein HscA, found in Salmonella newport (strain SL254).